The primary structure comprises 332 residues: Adenine deaminase (332 aa).

The Zn(2+) site is built by His-14, His-16, and His-194. Glu-197 functions as the Proton donor in the catalytic mechanism. A Zn(2+)-binding site is contributed by Asp-275. Substrate is bound at residue Asp-276.

This sequence belongs to the metallo-dependent hydrolases superfamily. Adenosine and AMP deaminases family. Adenine deaminase type 2 subfamily. Zn(2+) serves as cofactor.

It carries out the reaction adenine + H2O + H(+) = hypoxanthine + NH4(+). Functionally, catalyzes the hydrolytic deamination of adenine to hypoxanthine. Plays an important role in the purine salvage pathway and in nitrogen catabolism. This Psychrobacter cryohalolentis (strain ATCC BAA-1226 / DSM 17306 / VKM B-2378 / K5) protein is Adenine deaminase.